Here is an 89-residue protein sequence, read N- to C-terminus: Small ribosomal subunit protein uS15 (89 aa).

This sequence belongs to the universal ribosomal protein uS15 family. In terms of assembly, part of the 30S ribosomal subunit. Forms a bridge to the 50S subunit in the 70S ribosome, contacting the 23S rRNA.

One of the primary rRNA binding proteins, it binds directly to 16S rRNA where it helps nucleate assembly of the platform of the 30S subunit by binding and bridging several RNA helices of the 16S rRNA. Its function is as follows. Forms an intersubunit bridge (bridge B4) with the 23S rRNA of the 50S subunit in the ribosome. The polypeptide is Small ribosomal subunit protein uS15 (Chelativorans sp. (strain BNC1)).